Reading from the N-terminus, the 113-residue chain is N(2)-fixation sustaining protein CowN (113 aa).

It belongs to the CowN family.

Its function is as follows. Is required to sustain N(2)-dependent growth in the presence of low levels of carbon monoxide (CO). Probably acts by protecting the N(2) fixation ability of the nitrogenase complex, which is inactivated in the presence of CO. This is N(2)-fixation sustaining protein CowN from Wolinella succinogenes (strain ATCC 29543 / DSM 1740 / CCUG 13145 / JCM 31913 / LMG 7466 / NCTC 11488 / FDC 602W) (Vibrio succinogenes).